The chain runs to 90 residues: Large ribosomal subunit protein eL34 (90 aa).

Residues cysteine 36, cysteine 39, cysteine 72, and cysteine 75 each coordinate Zn(2+). The interval 41-72 is disordered; that stretch reads RPLNGVPRGRPSELRKLPKTKKRPERPYPNLC.

This sequence belongs to the eukaryotic ribosomal protein eL34 family. As to quaternary structure, part of the 50S ribosomal subunit. It depends on Zn(2+) as a cofactor.

The sequence is that of Large ribosomal subunit protein eL34 from Thermococcus kodakarensis (strain ATCC BAA-918 / JCM 12380 / KOD1) (Pyrococcus kodakaraensis (strain KOD1)).